A 117-amino-acid chain; its full sequence is Immunoglobulin heavy variable 3-5 (117 aa).

The first 18 residues, 1–18, serve as a signal peptide directing secretion; it reads MKMFTLLYLLTVVPGILS. The Ig-like domain occupies 19–117; that stretch reads DVQLQESGPG…EDTATYYCAR (99 aa). Cysteine 40 and cysteine 115 form a disulfide bridge.

The protein is Immunoglobulin heavy variable 3-5 of Mus musculus (Mouse).